We begin with the raw amino-acid sequence, 435 residues long: FAD-dependent monooxygenase ATEG_07662 (435 aa).

Residues 8-28 (PLDVAIIGGGIIGIMTALGLL) form a helical membrane-spanning segment. FAD is bound by residues glutamate 38, alanine 51, and arginine 119. Residue asparagine 191 is glycosylated (N-linked (GlcNAc...) asparagine). The active site involves arginine 201. FAD-binding residues include aspartate 317 and alanine 330.

This sequence belongs to the paxM FAD-dependent monooxygenase family. The cofactor is FAD.

The protein resides in the membrane. Its pathway is secondary metabolite biosynthesis. In terms of biological role, FAD-dependent monooxygenase; part of the cluster B that mediates the biosynthesis of azasperpyranones, members of the azaphilone family that exhibit anti-cancer activities. Azasperpyranones are synthesized by 2 clusters, A and B. Cluster A is responsible for the production of the polyhydric phenol moiety while the azaphilonoid scaffold is produced by the cluster B. The non-reducing polyketide synthase ATEG_03629 produces 5-methyl orsellinic acid, which is then reduced to 5-methyl orsellinic aldehyde by the NRPS-like protein ATEG_03630. 5-methyl orsellinic aldehyde is then first hydroxylated by the FAD-dependent monooxygenase ATEG_03635 and subsequently hydroxylated by the cytochrome P450 monooxygenase ATEG_03631 to produce the unstable polyhydric phenol precursor of azasperpyranones. On the other hand, the polyketide synthase ATEG_07659 is responsible for producing the 3,5-dimethyloctadienone moiety from acetyl-CoA, three malonyl-CoA, and two S-adenosyl methionines (SAM). The 3,5-dimethyloctadienone moiety is then loaded onto the SAT domain of ATEG_07661 and extended with four malonyl-CoA and one SAM, which leads to the formation of 2,4-dihydroxy-6-(5,7-dimethyl-2-oxo-trans-3-trans-5-nonadienyl)-3-methylbenzaldehyde (compound 8) after reductive release and aldol condensation. The FAD-dependent monooxygenase ATEG_07662 is the next enzyme in the biosynthesis sequence and hydroxylates the side chain at the benzylic position of compound 8. In Aspergillus nidulans, afoF, the ortholog of the FAD-dependent oxygenase ATEG_07660, is the key enzyme for the biosynthesis of asperfuranone by catalyzing the hydroxylation at C-8 of to prevent the formation of a six-membered ring hemiacetal intermediate and thus facilitating the formation of a five-membered ring to produce asperfuranone. In Aspergillus terreus, ATEG_07660 is probably not functional, which leads to the formation of the six-membered ring hemiacetal intermediate presperpyranone instead of asperfuranone. Finally, ATEG_03636 is involved in the condensation of the polyhydric phenol moiety produced by cluster A and the perasperpyranone precursor produced by cluster B, to yield azasperpyranone A. Further modifications of azasperpyranone A result in the production of derivatives, including azasperpyranone B to F. This is FAD-dependent monooxygenase ATEG_07662 from Aspergillus terreus (strain NIH 2624 / FGSC A1156).